Consider the following 290-residue polypeptide: Nucleotide-binding protein Clos_0574 (290 aa).

8-15 (GLSGAGKS) contributes to the ATP binding site. 59-62 (DIRG) contributes to the GTP binding site.

Belongs to the RapZ-like family.

In terms of biological role, displays ATPase and GTPase activities. This is Nucleotide-binding protein Clos_0574 from Alkaliphilus oremlandii (strain OhILAs) (Clostridium oremlandii (strain OhILAs)).